The primary structure comprises 179 residues: uncharacterized protein (179 aa).

This is an uncharacterized protein from Acanthamoeba polyphaga mimivirus (APMV).